The following is a 273-amino-acid chain: 3-methyl-2-oxobutanoate hydroxymethyltransferase (273 aa).

Residues Asp53 and Asp92 each coordinate Mg(2+). 3-methyl-2-oxobutanoate-binding positions include 53-54, Asp92, and Lys120; that span reads DS. Glu122 is a Mg(2+) binding site. Glu189 functions as the Proton acceptor in the catalytic mechanism.

This sequence belongs to the PanB family. In terms of assembly, homodecamer; pentamer of dimers. It depends on Mg(2+) as a cofactor.

The protein resides in the cytoplasm. It carries out the reaction 3-methyl-2-oxobutanoate + (6R)-5,10-methylene-5,6,7,8-tetrahydrofolate + H2O = 2-dehydropantoate + (6S)-5,6,7,8-tetrahydrofolate. Its pathway is cofactor biosynthesis; (R)-pantothenate biosynthesis; (R)-pantoate from 3-methyl-2-oxobutanoate: step 1/2. Functionally, catalyzes the reversible reaction in which hydroxymethyl group from 5,10-methylenetetrahydrofolate is transferred onto alpha-ketoisovalerate to form ketopantoate. This Cupriavidus necator (strain ATCC 17699 / DSM 428 / KCTC 22496 / NCIMB 10442 / H16 / Stanier 337) (Ralstonia eutropha) protein is 3-methyl-2-oxobutanoate hydroxymethyltransferase.